The chain runs to 412 residues: Probable beta-1,4-xylosyltransferase IRX10 (412 aa).

Residues 1-21 (MKIHSCLSAILLFLFFSASSA) form a helical; Signal-anchor for type II membrane protein membrane-spanning segment. At 22–412 (KQNVRTERIS…AGPVADLKPW (391 aa)) the chain is on the lumenal side. N-linked (GlcNAc...) asparagine glycosylation is found at Asn139 and Asn400.

The protein belongs to the glycosyltransferase 47 family. Limited to xylem cells. Expressed in the root tip, xylem cells of roots, and in the vasculature of roots, cotyledons and leaves.

It localises to the golgi apparatus membrane. Involved in the synthesis of the hemicellulose glucuronoxylan, a major component of secondary cell walls. Probably involved in the elongation of glucuronoxylan xylosyl backbone, especially in the formation of GlcUA side chain of xylans. The chain is Probable beta-1,4-xylosyltransferase IRX10 (IRX10) from Arabidopsis thaliana (Mouse-ear cress).